Reading from the N-terminus, the 152-residue chain is UPF0266 membrane protein YobD (152 aa).

Helical transmembrane passes span Leu-6–Met-26, Ile-45–His-65, and Ala-67–Ile-87.

The protein belongs to the UPF0266 family.

It is found in the cell inner membrane. In Escherichia coli O45:K1 (strain S88 / ExPEC), this protein is UPF0266 membrane protein YobD.